The chain runs to 128 residues: uncharacterized protein (128 aa).

The next 2 helical transmembrane spans lie at 33–53 (LLYI…VCYV) and 61–81 (FFCW…VIIY). Polar residues predominate over residues 99–120 (DSLNQNVGESQSNEPPKYTSTF). Residues 99 to 128 (DSLNQNVGESQSNEPPKYTSTFMDELDKQD) are disordered.

Its subcellular location is the membrane. This is an uncharacterized protein from Schizosaccharomyces pombe (strain 972 / ATCC 24843) (Fission yeast).